The primary structure comprises 472 residues: tRNA-2-methylthio-N(6)-dimethylallyladenosine synthase (472 aa).

The region spanning 22 to 138 (RSYWITTFGC…LETLLQQVDS (117 aa)) is the MTTase N-terminal domain. [4Fe-4S] cluster-binding residues include C31, C67, C101, C173, C177, and C180. The 238-residue stretch at 159 to 396 (RDSAICGWVN…NALVERNARE (238 aa)) folds into the Radical SAM core domain. Positions 399–467 (IRYQGRTEEV…SFSLSGTPLP (69 aa)) constitute a TRAM domain.

Belongs to the methylthiotransferase family. MiaB subfamily. Monomer. The cofactor is [4Fe-4S] cluster.

It is found in the cytoplasm. It catalyses the reaction N(6)-dimethylallyladenosine(37) in tRNA + (sulfur carrier)-SH + AH2 + 2 S-adenosyl-L-methionine = 2-methylsulfanyl-N(6)-dimethylallyladenosine(37) in tRNA + (sulfur carrier)-H + 5'-deoxyadenosine + L-methionine + A + S-adenosyl-L-homocysteine + 2 H(+). Catalyzes the methylthiolation of N6-(dimethylallyl)adenosine (i(6)A), leading to the formation of 2-methylthio-N6-(dimethylallyl)adenosine (ms(2)i(6)A) at position 37 in tRNAs that read codons beginning with uridine. The polypeptide is tRNA-2-methylthio-N(6)-dimethylallyladenosine synthase (Synechococcus sp. (strain CC9902)).